A 297-amino-acid polypeptide reads, in one-letter code: F-box only protein 2 (297 aa).

Residues 1 to 42 (MDGDGDPESVGQPEEASPEEQQEEACAEEANGGEERPEDDGE) form a disordered region. The span at 16-27 (ASPEEQQEEACA) shows a compositional bias: acidic residues. In terms of domain architecture, F-box spans 45 to 92 (AAYLDELPEPLLLRVLAELPAAQLVQACRLVCLRWKELVDGAPLWLLK). One can recognise an FBA domain in the interval 114 to 297 (FYFLSKRRRN…VTNSSVWVEP (184 aa)). A carbohydrate-binding positions include 211–213 (RRD) and 279–280 (YW).

In terms of assembly, component of the SCF(FBXO2) complex consisting of CUL1, RBX1, SKP1 and FBXO2. Predominantly detected as heterodimer with SKP1; the heterodimer with SKP1 is not part of the SCF(FBXO2) complex.

It is found in the cytoplasm. Its subcellular location is the microsome membrane. The protein operates within protein modification; protein ubiquitination. In terms of biological role, substrate recognition component of a SCF (SKP1-CUL1-F-box protein) E3 ubiquitin-protein ligase complex that mediates the ubiquitination and subsequent proteasomal degradation of target proteins. Involved in the endoplasmic reticulum-associated degradation pathway (ERAD) for misfolded lumenal proteins by recognizing and binding sugar chains on unfolded glycoproteins that are retrotranslocated into the cytosol and promoting their ubiquitination and subsequent degradation. Prevents formation of cytosolic aggregates of unfolded glycoproteins that have been retrotranslocated into the cytosol. Able to recognize and bind denatured glycoproteins, preferentially those of the high-mannose type. This Bos taurus (Bovine) protein is F-box only protein 2 (FBXO2).